Here is a 149-residue protein sequence, read N- to C-terminus: L-alanine exporter AlaE (149 aa).

4 consecutive transmembrane segments (helical) span residues 16-36 (FAMV…LSGM), 46-66 (LVAI…RDLF), 85-105 (ILAY…VVGA), and 112-132 (AAVS…GYFL).

It belongs to the AlaE exporter family.

It is found in the cell inner membrane. In terms of biological role, exports L-alanine. The polypeptide is L-alanine exporter AlaE (Shigella flexneri).